Here is a 793-residue protein sequence, read N- to C-terminus: Probable phosphoketolase (793 aa).

The protein belongs to the XFP family. Thiamine diphosphate serves as cofactor.

This Gloeobacter violaceus (strain ATCC 29082 / PCC 7421) protein is Probable phosphoketolase.